The primary structure comprises 211 residues: Endo-1,4-beta-xylanase A (211 aa).

The N-terminal stretch at 1–27 (MKVTAAFAGLLVTAFAAPVPEPVLVSR) is a signal peptide. Residues 28–210 (SAGINYVQNY…GAGSASVTIS (183 aa)) enclose the GH11 domain. E106 (nucleophile) is an active-site residue. A disulfide bridge connects residues C119 and C138. The Proton donor role is filled by E197.

Belongs to the glycosyl hydrolase 11 (cellulase G) family.

It localises to the secreted. It catalyses the reaction Endohydrolysis of (1-&gt;4)-beta-D-xylosidic linkages in xylans.. The protein operates within glycan degradation; xylan degradation. Functionally, endo-1,4-beta-xylanase involved in the hydrolysis of xylan, a major structural heterogeneous polysaccharide found in plant biomass representing the second most abundant polysaccharide in the biosphere, after cellulose. This chain is Endo-1,4-beta-xylanase A (xynA), found in Aspergillus niger.